We begin with the raw amino-acid sequence, 199 residues long: Probable GTP-binding protein EngB (199 aa).

One can recognise an EngB-type G domain in the interval 28–199 (DLPEIALAGR…DSWDAILEQV (172 aa)). GTP contacts are provided by residues 36–43 (GRSNVGKS), 63–67 (GKTQL), 81–84 (DVPG), 148–151 (TKAD), and 180–182 (FSS). 2 residues coordinate Mg(2+): Ser-43 and Thr-65.

The protein belongs to the TRAFAC class TrmE-Era-EngA-EngB-Septin-like GTPase superfamily. EngB GTPase family. Requires Mg(2+) as cofactor.

Necessary for normal cell division and for the maintenance of normal septation. The sequence is that of Probable GTP-binding protein EngB from Streptococcus pyogenes serotype M49 (strain NZ131).